The chain runs to 611 residues: DNA mismatch repair protein MutL (611 aa).

Residues 364–384 (NVNSKPSKYRPATSPTVPKYT) are disordered.

This sequence belongs to the DNA mismatch repair MutL/HexB family.

Functionally, this protein is involved in the repair of mismatches in DNA. It is required for dam-dependent methyl-directed DNA mismatch repair. May act as a 'molecular matchmaker', a protein that promotes the formation of a stable complex between two or more DNA-binding proteins in an ATP-dependent manner without itself being part of a final effector complex. This chain is DNA mismatch repair protein MutL, found in Rickettsia bellii (strain OSU 85-389).